A 396-amino-acid chain; its full sequence is Ribosomal RNA large subunit methyltransferase I (396 aa).

The region spanning Ser2–Arg81 is the PUA domain.

The protein belongs to the methyltransferase superfamily. RlmI family.

The protein localises to the cytoplasm. The enzyme catalyses cytidine(1962) in 23S rRNA + S-adenosyl-L-methionine = 5-methylcytidine(1962) in 23S rRNA + S-adenosyl-L-homocysteine + H(+). Functionally, specifically methylates the cytosine at position 1962 (m5C1962) of 23S rRNA. The chain is Ribosomal RNA large subunit methyltransferase I from Escherichia coli (strain SMS-3-5 / SECEC).